Here is a 371-residue protein sequence, read N- to C-terminus: Aminomethyltransferase (371 aa).

The protein belongs to the GcvT family. In terms of assembly, the glycine cleavage system is composed of four proteins: P, T, L and H.

The catalysed reaction is N(6)-[(R)-S(8)-aminomethyldihydrolipoyl]-L-lysyl-[protein] + (6S)-5,6,7,8-tetrahydrofolate = N(6)-[(R)-dihydrolipoyl]-L-lysyl-[protein] + (6R)-5,10-methylene-5,6,7,8-tetrahydrofolate + NH4(+). The glycine cleavage system catalyzes the degradation of glycine. This chain is Aminomethyltransferase, found in Cellvibrio japonicus (strain Ueda107) (Pseudomonas fluorescens subsp. cellulosa).